We begin with the raw amino-acid sequence, 35 residues long: UPF0387 membrane protein YohO (35 aa).

Residues 6–26 form a helical membrane-spanning segment; the sequence is IGVIALFLFMAFGGIGGVMLA.

The protein belongs to the UPF0387 family.

It localises to the cell inner membrane. This Escherichia coli O8 (strain IAI1) protein is UPF0387 membrane protein YohO.